A 350-amino-acid polypeptide reads, in one-letter code: Serine-threonine kinase receptor-associated protein (350 aa).

WD repeat units lie at residues 12-56 (GHTR…GTFL), 57-96 (GHKGAVWGATLNKDATKAATAAADFTAKVWDAVSGDELMT), 98-137 (AHKHIVKTVDFTQDSNYLLTGGQDKLLRIYDLNKPEAEPK), 141-179 (GHTSGIKKALWCSEDKQILSADDKTVRLWDHATMTEVKS), 180-212 (LNFNMSVSSMEYIPEGEILVITYGRSIAFHSAV), 221-262 (EAPA…ESYK), and 263-302 (GHFGPIHCVRFSPDGELYASGSEDGTLRLWQTVVGKTYGL). A phosphoserine mark is found at Ser-312, Ser-335, and Ser-338.

This sequence belongs to the WD repeat STRAP family. In terms of assembly, part of the core SMN complex that contains SMN1, GEMIN2/SIP1, DDX20/GEMIN3, GEMIN4, GEMIN5, GEMIN6, GEMIN7, GEMIN8 and STRAP/UNRIP. Part of the SMN-Sm complex that contains SMN1, GEMIN2/SIP1, DDX20/GEMIN3, GEMIN4, GEMIN5, GEMIN6, GEMIN7, GEMIN8, STRAP/UNRIP and the Sm proteins SNRPB, SNRPD1, SNRPD2, SNRPD3, SNRPE, SNRPF and SNRPG. Associates with the SMN complex in the cytoplasm but not in the nucleus. Interacts with GEMIN6; the interaction is direct. Interacts with GEMIN7; the interaction is direct. Interacts with CSDE1/UNR and MAWBP. Interacts with PDPK1. Interacts with TRIM48.

It localises to the cytoplasm. Its subcellular location is the nucleus. Functionally, the SMN complex catalyzes the assembly of small nuclear ribonucleoproteins (snRNPs), the building blocks of the spliceosome, and thereby plays an important role in the splicing of cellular pre-mRNAs. Most spliceosomal snRNPs contain a common set of Sm proteins SNRPB, SNRPD1, SNRPD2, SNRPD3, SNRPE, SNRPF and SNRPG that assemble in a heptameric protein ring on the Sm site of the small nuclear RNA to form the core snRNP (Sm core). In the cytosol, the Sm proteins SNRPD1, SNRPD2, SNRPE, SNRPF and SNRPG are trapped in an inactive 6S pICln-Sm complex by the chaperone CLNS1A that controls the assembly of the core snRNP. To assemble core snRNPs, the SMN complex accepts the trapped 5Sm proteins from CLNS1A forming an intermediate. Binding of snRNA inside 5Sm triggers eviction of the SMN complex, thereby allowing binding of SNRPD3 and SNRPB to complete assembly of the core snRNP. STRAP plays a role in the cellular distribution of the SMN complex. Negatively regulates TGF-beta signaling but positively regulates the PDPK1 kinase activity by enhancing its autophosphorylation and by significantly reducing the association of PDPK1 with 14-3-3 protein. This is Serine-threonine kinase receptor-associated protein (STRAP) from Homo sapiens (Human).